The sequence spans 272 residues: Phosphatidylglycerol--prolipoprotein diacylglyceryl transferase (272 aa).

Transmembrane regions (helical) follow at residues 24 to 44 (WYGI…KWIA), 59 to 79 (YFIW…ILFY), 102 to 122 (FIGI…IASF), and 129 to 149 (GVKF…GYVF). Arg151 is a binding site for a 1,2-diacyl-sn-glycero-3-phospho-(1'-sn-glycerol). The next 3 membrane-spanning stretches (helical) occupy residues 180 to 200 (PSQL…LYAW), 208 to 228 (GQLG…AEFW), and 244 to 264 (MGQL…GYLA).

This sequence belongs to the Lgt family.

The protein localises to the cell inner membrane. It carries out the reaction L-cysteinyl-[prolipoprotein] + a 1,2-diacyl-sn-glycero-3-phospho-(1'-sn-glycerol) = an S-1,2-diacyl-sn-glyceryl-L-cysteinyl-[prolipoprotein] + sn-glycerol 1-phosphate + H(+). The protein operates within protein modification; lipoprotein biosynthesis (diacylglyceryl transfer). Its function is as follows. Catalyzes the transfer of the diacylglyceryl group from phosphatidylglycerol to the sulfhydryl group of the N-terminal cysteine of a prolipoprotein, the first step in the formation of mature lipoproteins. This chain is Phosphatidylglycerol--prolipoprotein diacylglyceryl transferase, found in Wolinella succinogenes (strain ATCC 29543 / DSM 1740 / CCUG 13145 / JCM 31913 / LMG 7466 / NCTC 11488 / FDC 602W) (Vibrio succinogenes).